The chain runs to 185 residues: Ribonuclease HII (185 aa).

Residues 1 to 185 (MIILGIDEAG…KSYKPIQLLL (185 aa)) enclose the RNase H type-2 domain. A divalent metal cation-binding residues include D7, E8, and D99.

This sequence belongs to the RNase HII family. Mn(2+) serves as cofactor. Requires Mg(2+) as cofactor.

It is found in the cytoplasm. It carries out the reaction Endonucleolytic cleavage to 5'-phosphomonoester.. In terms of biological role, endonuclease that specifically degrades the RNA of RNA-DNA hybrids. In Francisella tularensis subsp. novicida (strain U112), this protein is Ribonuclease HII.